Here is a 166-residue protein sequence, read N- to C-terminus: Dihydrofolate reductase (166 aa).

Positions 6-164 constitute a DHFR domain; that stretch reads KISLIVAMDK…YDYYFHIYER (159 aa). Position 10-12 (10-12) interacts with substrate; the sequence is IVA. NADP(+)-binding positions include 11–12 and 19–24; these read VA and IGKDND. Substrate is bound at residue Asp32. 48 to 51 contacts NADP(+); sequence GRKN. A substrate-binding site is contributed by Arg62. Residues 67-70 and 100-105 contribute to the NADP(+) site; these read LTRD and FGGEQI. Position 119 (Thr119) interacts with substrate.

It belongs to the dihydrofolate reductase family.

The enzyme catalyses (6S)-5,6,7,8-tetrahydrofolate + NADP(+) = 7,8-dihydrofolate + NADPH + H(+). Its pathway is cofactor biosynthesis; tetrahydrofolate biosynthesis; 5,6,7,8-tetrahydrofolate from 7,8-dihydrofolate: step 1/1. Its function is as follows. Key enzyme in folate metabolism. Catalyzes an essential reaction for de novo glycine and purine synthesis, and for DNA precursor synthesis. The sequence is that of Dihydrofolate reductase (dfrD) from Staphylococcus haemolyticus.